The chain runs to 79 residues: Acyl carrier protein (79 aa).

In terms of domain architecture, Carrier spans 2–77 (DNIEQRVKKI…LAIDFAKSKA (76 aa)). Ser-37 is modified (O-(pantetheine 4'-phosphoryl)serine).

It belongs to the acyl carrier protein (ACP) family. Post-translationally, 4'-phosphopantetheine is transferred from CoA to a specific serine of apo-ACP by AcpS. This modification is essential for activity because fatty acids are bound in thioester linkage to the sulfhydryl of the prosthetic group.

It localises to the cytoplasm. The protein operates within lipid metabolism; fatty acid biosynthesis. In terms of biological role, carrier of the growing fatty acid chain in fatty acid biosynthesis. This Polynucleobacter necessarius subsp. necessarius (strain STIR1) protein is Acyl carrier protein.